The following is a 312-amino-acid chain: MAGAGGDKPFAKAGPSPLSRVLRISQLDAFELDGALEQLVWSQFTQCFQHFKPGILTPVEPELKALLQLLLWRFTIYSNSATVGQSLLNIRYKNALIPGQKYRPMSRPQKFWFALLTVGEKWFRERSHSLFLNHPAESNARKARKVLSILLGLTKAASLVNFLLFLQRGTFPTLTERLLGVQPVFSRPQGPRDINFQYLNRELLWHGFAEFLIFLLPLINVWKLKAGVSALFSPLSDLTGTQSSEETHLTECAICGEWPTMPHSIGCKHVFCYYCVKSNVIADIYFTCPKCGAETGQIEPVRLQVGTELLQS.

The Peroxisomal matrix segment spans residues 1 to 22 (MAGAGGDKPFAKAGPSPLSRVL). A helical transmembrane segment spans residues 23–49 (RISQLDAFELDGALEQLVWSQFTQCFQ). Topologically, residues 50–55 (HFKPGI) are cytoplasmic. Residues 56 to 81 (LTPVEPELKALLQLLLWRFTIYSNSA) traverse the membrane as a helical segment. At 82-105 (TVGQSLLNIRYKNALIPGQKYRPM) the chain is on the peroxisomal matrix side. A helical transmembrane segment spans residues 106–132 (SRPQKFWFALLTVGEKWFRERSHSLFL). Residues 133–141 (NHPAESNAR) are Cytoplasmic-facing. Residues 142–168 (KARKVLSILLGLTKAASLVNFLLFLQR) traverse the membrane as a helical segment. Over 169–195 (GTFPTLTERLLGVQPVFSRPQGPRDIN) the chain is Peroxisomal matrix. The helical transmembrane segment at 196-219 (FQYLNRELLWHGFAEFLIFLLPLI) threads the bilayer. At 220–312 (NVWKLKAGVS…LQVGTELLQS (93 aa)) the chain is on the cytoplasmic side. Positions 252, 255, 267, 269, 272, 275, 288, and 291 each coordinate Zn(2+). The RING-type zinc-finger motif lies at 252–292 (CAICGEWPTMPHSIGCKHVFCYYCVKSNVIADIYFTCPKCG).

The protein belongs to the pex2/pex10/pex12 family. As to quaternary structure, component of the PEX2-PEX10-PEX12 retrotranslocation channel.

The protein localises to the peroxisome membrane. It catalyses the reaction [E2 ubiquitin-conjugating enzyme]-S-ubiquitinyl-L-cysteine + [acceptor protein]-L-cysteine = [E2 ubiquitin-conjugating enzyme]-L-cysteine + [acceptor protein]-S-ubiquitinyl-L-cysteine.. The enzyme catalyses S-ubiquitinyl-[E2 ubiquitin-conjugating enzyme]-L-cysteine + [acceptor protein]-L-lysine = [E2 ubiquitin-conjugating enzyme]-L-cysteine + N(6)-ubiquitinyl-[acceptor protein]-L-lysine.. It participates in protein modification; protein ubiquitination. E3 ubiquitin-protein ligase component of a retrotranslocation channel required for peroxisome organization by mediating export of the PEX5 receptor from peroxisomes to the cytosol, thereby promoting PEX5 recycling. The retrotranslocation channel is composed of PEX2, PEX10 and PEX12; each subunit contributing transmembrane segments that coassemble into an open channel that specifically allows the passage of PEX5 through the peroxisomal membrane. PEX2 also regulates peroxisome organization by acting as a E3 ubiquitin-protein ligase. The chain is Peroxisome biogenesis factor 2 (pex2) from Danio rerio (Zebrafish).